Here is a 433-residue protein sequence, read N- to C-terminus: 5-methylthioadenosine/S-adenosylhomocysteine deaminase (433 aa).

Residues His-67 and His-69 each contribute to the Zn(2+) site. Residues Glu-96, Arg-148, Arg-158, and His-186 each coordinate substrate. Position 213 (His-213) interacts with Zn(2+). Substrate-binding residues include Glu-216 and Asp-301. Residue Asp-301 coordinates Zn(2+).

The protein belongs to the metallo-dependent hydrolases superfamily. MTA/SAH deaminase family. Zn(2+) serves as cofactor.

The enzyme catalyses S-adenosyl-L-homocysteine + H2O + H(+) = S-inosyl-L-homocysteine + NH4(+). The catalysed reaction is S-methyl-5'-thioadenosine + H2O + H(+) = S-methyl-5'-thioinosine + NH4(+). Functionally, catalyzes the deamination of 5-methylthioadenosine and S-adenosyl-L-homocysteine into 5-methylthioinosine and S-inosyl-L-homocysteine, respectively. Is also able to deaminate adenosine. This is 5-methylthioadenosine/S-adenosylhomocysteine deaminase from Pelotomaculum thermopropionicum (strain DSM 13744 / JCM 10971 / SI).